Consider the following 721-residue polypeptide: Exocyst complex component 3-like protein 4 (721 aa).

Disordered stretches follow at residues 1–52 (MPLP…SLGM) and 94–135 (GLTA…QAES). Residues 22–37 (SQTLPVTTWKSNSMKE) are compositionally biased toward polar residues. Ser515 is modified (phosphoserine).

It belongs to the SEC6 family.

In Mus musculus (Mouse), this protein is Exocyst complex component 3-like protein 4 (Exoc3l4).